The primary structure comprises 947 residues: Protein RRC1-like (947 aa).

Over residues 1-11 (MVKDEFFLDHP) the composition is skewed to basic and acidic residues. 2 disordered regions span residues 1-35 (MVKD…RMKQ) and 63-167 (PNDN…DELP). The span at 12 to 34 (GRKHRSRNTEKKKKPRRRERRMK) shows a compositional bias: basic residues. Composition is skewed to basic and acidic residues over residues 66-84 (NKLK…DSIS) and 104-155 (KGPE…DHNS). The region spanning 187–268 (TNLYVVNLSS…YELKIGWGKV (82 aa)) is the RRM domain. An SURP motif repeat occupies 336–379 (IIDTMALNVLDGGCAFEQAIMERGRGNPLFNFLFELGSKEHTYY). The segment at 412–434 (PPLPATRSPEHGKESRGTYAAGK) is disordered. Residues 444-589 (LTDSQRDEFE…GLRATFLRSR (146 aa)) form the CID domain. Residues 638–672 (LMNRPISELERRCRHNGLSLLGGREMMVARLVCLK) form the SAP domain. Disordered stretches follow at residues 752–797 (REDD…PENE) and 846–947 (GLSG…RGMR). Composition is skewed to basic and acidic residues over residues 854–876 (LPEK…RSES), 888–916 (LTRE…LDKD), and 924–947 (SSRE…RGMR).

In terms of tissue distribution, expressed in leaves, inflorescence stems, roots, flower buds, open flowers and siliques.

Its function is as follows. Probable SR-like splicing factor. The chain is Protein RRC1-like from Arabidopsis thaliana (Mouse-ear cress).